The following is an 887-amino-acid chain: Tiger protein O1 (887 aa).

The N-terminal stretch at 1–21 (MEKKLLIIVIVFLFSTIQVFC) is a signal peptide. At 22–845 (RIDDKTFVIS…SLSKKSIILL (824 aa)) the chain is on the extracellular side. 24 N-linked (GlcNAc...) asparagine glycosylation sites follow: Asn32, Asn70, Asn186, Asn207, Asn219, Asn259, Asn297, Asn314, Asn325, Asn338, Asn354, Asn393, Asn431, Asn588, Asn629, Asn652, Asn687, Asn710, Asn720, Asn730, Asn775, Asn788, Asn811, and Asn816. Positions 277-365 (NSVPYSKGGL…TNENKLLFNY (89 aa)) constitute an IPT/TIG 1 domain. The IPT/TIG 2 domain maps to 710–767 (NTSSINVNGGNLTIYGKNFYNVSNIKVEVDNQLKCNKIEFINLNSLTCFLPPFIETLF). The interval 811–835 (NDTSENSTNDILNHEKNNNNQKDGS) is disordered. Residues 846 to 866 (SILLPSFIILIVSLAIVILVI) form a helical membrane-spanning segment. Topologically, residues 867–887 (KRNKTKHSKNMSSKEKELMKQ) are cytoplasmic.

It localises to the membrane. The protein is Tiger protein O1 (tgrO1) of Dictyostelium discoideum (Social amoeba).